The chain runs to 111 residues: Ig kappa chain V-III region PC 6684 (111 aa).

The interval 1 to 23 is framework-1; that stretch reads DIVLTQSPASLAVSLGQRATISC. A disulfide bridge links Cys23 with Cys92. The complementarity-determining-1 stretch occupies residues 24–38; it reads RASKSVSTSGYSYMH. Residues 39 to 53 form a framework-2 region; the sequence is WYQQKPGQPPKLLIY. Residues 54–60 are complementarity-determining-2; that stretch reads LASNLES. The framework-3 stretch occupies residues 61 to 92; it reads GVPARFSGSGSGTDFTLNIHPVEEEDAATYYC. Residues 93 to 101 form a complementarity-determining-3 region; the sequence is QHSRELPRT. Residues 102–111 form a framework-4 region; the sequence is FGGGTKLEIK.

This chain is Ig kappa chain V-III region PC 6684, found in Mus musculus (Mouse).